The chain runs to 56 residues: Cytochrome b-c1 complex subunit 10 (56 aa).

Topologically, residues 1-12 are mitochondrial matrix; that stretch reads MLTRFLGPRYRQ. A helical transmembrane segment spans residues 13-35; sequence LARNWVPTASLWGAVGAVGLVWA. Residues 36 to 56 are Mitochondrial intermembrane-facing; it reads TDWRLILDWVPYINGKFKKDD.

This sequence belongs to the UQCR11/QCR10 family. In terms of assembly, component of the ubiquinol-cytochrome c oxidoreductase (cytochrome b-c1 complex, complex III, CIII), a multisubunit enzyme composed of 11 subunits. The complex is composed of 3 respiratory subunits cytochrome b, cytochrome c1 and Rieske protein UQCRFS1, 2 core protein subunits UQCRC1/QCR1 and UQCRC2/QCR2, and 6 low-molecular weight protein subunits UQCRH/QCR6, UQCRB/QCR7, UQCRQ/QCR8, UQCR10/QCR9, UQCR11/QCR10 and subunit 9, the cleavage product of Rieske protein UQCRFS1. The complex exists as an obligatory dimer and forms supercomplexes (SCs) in the inner mitochondrial membrane with NADH-ubiquinone oxidoreductase (complex I, CI) and cytochrome c oxidase (complex IV, CIV), resulting in different assemblies (supercomplex SCI(1)III(2)IV(1) and megacomplex MCI(2)III(2)IV(2)).

Its subcellular location is the mitochondrion inner membrane. Its function is as follows. Component of the ubiquinol-cytochrome c oxidoreductase, a multisubunit transmembrane complex that is part of the mitochondrial electron transport chain which drives oxidative phosphorylation. The respiratory chain contains 3 multisubunit complexes succinate dehydrogenase (complex II, CII), ubiquinol-cytochrome c oxidoreductase (cytochrome b-c1 complex, complex III, CIII) and cytochrome c oxidase (complex IV, CIV), that cooperate to transfer electrons derived from NADH and succinate to molecular oxygen, creating an electrochemical gradient over the inner membrane that drives transmembrane transport and the ATP synthase. The cytochrome b-c1 complex catalyzes electron transfer from ubiquinol to cytochrome c, linking this redox reaction to translocation of protons across the mitochondrial inner membrane, with protons being carried across the membrane as hydrogens on the quinol. In the process called Q cycle, 2 protons are consumed from the matrix, 4 protons are released into the intermembrane space and 2 electrons are passed to cytochrome c. QCR10 has a role in CIII assembly and RIP1 stability. This Bos taurus (Bovine) protein is Cytochrome b-c1 complex subunit 10 (UQCR11).